The sequence spans 443 residues: Probable nitrate/nitrite antiporter NarK2 (443 aa).

Transmembrane regions (helical) follow at residues 32–52 (ITTF…ALVV), 66–86 (LFWL…IWTF), 95–115 (HLVT…GFAV), 123–143 (WVLL…SGYM), 172–192 (IVQF…LLGG), 210–230 (NATF…WVYL), 256–276 (SLYI…PLLI), 292–312 (YAFL…PISD), 314–334 (LGGA…ALLV), 346–366 (FPMF…GNAS), 383–403 (VIGW…TLAA), and 409–429 (TGGF…NFFL).

This sequence belongs to the major facilitator superfamily. Nitrate/nitrite porter (TC 2.A.1.8) family.

It is found in the cell membrane. The catalysed reaction is nitrate(in) + nitrite(out) = nitrate(out) + nitrite(in). Functionally, probable nitrate/nitrite antiporter that may be involved in nitrate import and nitrite export during anaerobic growth. The polypeptide is Probable nitrate/nitrite antiporter NarK2 (Thermus thermophilus).